The sequence spans 804 residues: Elongation factor G, mitochondrial (804 aa).

The N-terminal 63 residues, 1-63, are a transit peptide targeting the mitochondrion; sequence MSMHRVARAV…RHFFQSPIIR (63 aa). The tr-type G domain maps to 99-385; it reads RRVRNIGIAA…AVCDYLPNPA (287 aa). GTP is bound by residues 108–115, 183–187, and 237–240; these read AHIDSGKT, DTPGH, and NKMD.

Belongs to the TRAFAC class translation factor GTPase superfamily. Classic translation factor GTPase family. EF-G/EF-2 subfamily.

It localises to the mitochondrion. It participates in protein biosynthesis; polypeptide chain elongation. Functionally, mitochondrial GTPase that catalyzes the GTP-dependent ribosomal translocation step during translation elongation. During this step, the ribosome changes from the pre-translocational (PRE) to the post-translocational (POST) state as the newly formed A-site-bound peptidyl-tRNA and P-site-bound deacylated tRNA move to the P and E sites, respectively. Catalyzes the coordinated movement of the two tRNA molecules, the mRNA and conformational changes in the ribosome. This chain is Elongation factor G, mitochondrial (mef1), found in Sclerotinia sclerotiorum (strain ATCC 18683 / 1980 / Ss-1) (White mold).